The sequence spans 160 residues: Serine-protein kinase RsbW (160 aa).

This sequence belongs to the anti-sigma-factor family.

It catalyses the reaction L-seryl-[protein] + ATP = O-phospho-L-seryl-[protein] + ADP + H(+). It carries out the reaction L-threonyl-[protein] + ATP = O-phospho-L-threonyl-[protein] + ADP + H(+). Its function is as follows. Negative regulator of sigma-B activity. Phosphorylates and inactivates its specific antagonist protein, RsbV. Upon phosphorylation of RsbV, RsbW is released and binds to sigma-B, thereby blocking its ability to form an RNA polymerase holoenzyme (E-sigma-B). In Bacillus cereus (strain B4264), this protein is Serine-protein kinase RsbW.